Here is a 440-residue protein sequence, read N- to C-terminus: MSLITDIYAREVLDSRGNPTVEVEVYTEDGGFGRGIVPSGASTGEHEAVELRDGDKNRFSGKGVEKAVANVNGPISKEIVGFEVTDQIAIDKAMIKLDGTPNKGKLGANAILGVSLAVARAAADELQVPLYNYIGGSNAHVLPTPMMNVINGGAHSENKVDFQEFMIMPVGAPSVKEAIRMGSETFHALKSLLSADGKATSVGDEGGFAPDFANNEEPLQYLIKAIEKAGYKPGKDVAIAVDVAASELWNDEDKKYKLRWSTGEEFTTEEFVKYLEGLVNKYPIISIEDPIDENNWDDWASITKELGKKVQLVGDDFFVTNTEYLAKGIKMGAANAILIKVNQIGTLTETMESIEMAKEAGYTAIVSHRSGETEDTTIADLVVATNAGQIKTGSMSRTDRIAKYNQLMRIEDQLEGVAEYKGINSFYNLSADAREEISNK.

Gln163 contacts (2R)-2-phosphoglycerate. The active-site Proton donor is Glu205. 3 residues coordinate Mg(2+): Asp242, Glu288, and Asp315. (2R)-2-phosphoglycerate is bound by residues Lys340, Arg369, Ser370, and Lys391. Lys340 acts as the Proton acceptor in catalysis.

It belongs to the enolase family. Requires Mg(2+) as cofactor.

It localises to the cytoplasm. It is found in the secreted. The protein localises to the cell surface. The enzyme catalyses (2R)-2-phosphoglycerate = phosphoenolpyruvate + H2O. It functions in the pathway carbohydrate degradation; glycolysis; pyruvate from D-glyceraldehyde 3-phosphate: step 4/5. Functionally, catalyzes the reversible conversion of 2-phosphoglycerate (2-PG) into phosphoenolpyruvate (PEP). It is essential for the degradation of carbohydrates via glycolysis. The sequence is that of Enolase from Pediococcus pentosaceus (strain ATCC 25745 / CCUG 21536 / LMG 10740 / 183-1w).